The following is a 213-amino-acid chain: Kynurenine formamidase (213 aa).

Tryptophan 18 serves as a coordination point for substrate. Zn(2+)-binding residues include histidine 48, histidine 52, and aspartate 54. Catalysis depends on histidine 58, which acts as the Proton donor/acceptor. Positions 160 and 172 each coordinate Zn(2+).

It belongs to the Cyclase 1 superfamily. KynB family. Homodimer. Requires Zn(2+) as cofactor.

It carries out the reaction N-formyl-L-kynurenine + H2O = L-kynurenine + formate + H(+). The protein operates within amino-acid degradation; L-tryptophan degradation via kynurenine pathway; L-kynurenine from L-tryptophan: step 2/2. In terms of biological role, catalyzes the hydrolysis of N-formyl-L-kynurenine to L-kynurenine, the second step in the kynurenine pathway of tryptophan degradation. The polypeptide is Kynurenine formamidase (Burkholderia multivorans (strain ATCC 17616 / 249)).